The chain runs to 441 residues: Proline--tRNA ligase (441 aa).

It belongs to the class-II aminoacyl-tRNA synthetase family. ProS type 2 subfamily. In terms of assembly, homodimer.

It localises to the cytoplasm. The enzyme catalyses tRNA(Pro) + L-proline + ATP = L-prolyl-tRNA(Pro) + AMP + diphosphate. Functionally, catalyzes the attachment of proline to tRNA(Pro) in a two-step reaction: proline is first activated by ATP to form Pro-AMP and then transferred to the acceptor end of tRNA(Pro). This chain is Proline--tRNA ligase, found in Afipia carboxidovorans (strain ATCC 49405 / DSM 1227 / KCTC 32145 / OM5) (Oligotropha carboxidovorans).